Consider the following 258-residue polypeptide: UPF0246 protein Shew_1093 (258 aa).

It belongs to the UPF0246 family.

The polypeptide is UPF0246 protein Shew_1093 (Shewanella loihica (strain ATCC BAA-1088 / PV-4)).